Reading from the N-terminus, the 182-residue chain is Crossover junction endodeoxyribonuclease RuvC (182 aa).

Active-site residues include Asp7, Glu69, and Asp141. 3 residues coordinate Mg(2+): Asp7, Glu69, and Asp141.

The protein belongs to the RuvC family. As to quaternary structure, homodimer which binds Holliday junction (HJ) DNA. The HJ becomes 2-fold symmetrical on binding to RuvC with unstacked arms; it has a different conformation from HJ DNA in complex with RuvA. In the full resolvosome a probable DNA-RuvA(4)-RuvB(12)-RuvC(2) complex forms which resolves the HJ. Mg(2+) is required as a cofactor.

It is found in the cytoplasm. The enzyme catalyses Endonucleolytic cleavage at a junction such as a reciprocal single-stranded crossover between two homologous DNA duplexes (Holliday junction).. The RuvA-RuvB-RuvC complex processes Holliday junction (HJ) DNA during genetic recombination and DNA repair. Endonuclease that resolves HJ intermediates. Cleaves cruciform DNA by making single-stranded nicks across the HJ at symmetrical positions within the homologous arms, yielding a 5'-phosphate and a 3'-hydroxyl group; requires a central core of homology in the junction. The consensus cleavage sequence is 5'-(A/T)TT(C/G)-3'. Cleavage occurs on the 3'-side of the TT dinucleotide at the point of strand exchange. HJ branch migration catalyzed by RuvA-RuvB allows RuvC to scan DNA until it finds its consensus sequence, where it cleaves and resolves the cruciform DNA. The sequence is that of Crossover junction endodeoxyribonuclease RuvC from Polaromonas sp. (strain JS666 / ATCC BAA-500).